Reading from the N-terminus, the 348-residue chain is MSEKMVAIMKTKPEYGAELVEVDVPKPGPGEVLIKILATSICGTDLHIYEWNEWAQTRIRPPQIMGHEVAGEVVEVGPGVEGIEVGDYVSVETHIVCGKCYACKRGQYHVCQNTKIFGVDTDGVFAEYAVVPAQNVWKNPKNIPPEYATLQEPLGNAVDTVLAGPIAGKSVLITGAGPLGLLGIAVAKASGAYPVIVSEPSEFRRNLAKKVGADYVINPFEEDVVKEVMDITDGNGVDVFLEFSGAPKALEQGLQAVTPAGRVSLLGLFPGKVSIDFNNLIIFKALTVYGITGRHLWETWYTVSRLLQSGKLNIDPIITHKYKGFDKYEEAFELMRAGKTGKVVFMLK.

Cys-42 contributes to the Zn(2+) binding site. Active-site charge relay system residues include Thr-44 and His-47. 6 residues coordinate Zn(2+): His-67, Glu-68, Cys-97, Cys-100, Cys-103, and Cys-111. Residues Leu-179, Glu-199, Arg-204, 266 to 268 (LGL), and 291 to 292 (IT) contribute to the NAD(+) site.

The protein belongs to the zinc-containing alcohol dehydrogenase family. As to quaternary structure, homotetramer. Requires Zn(2+) as cofactor.

It is found in the cytoplasm. The enzyme catalyses L-threonine + NAD(+) = (2S)-2-amino-3-oxobutanoate + NADH + H(+). Its pathway is amino-acid degradation; L-threonine degradation via oxydo-reductase pathway; glycine from L-threonine: step 1/2. Functionally, catalyzes the NAD(+)-dependent oxidation of L-threonine to 2-amino-3-ketobutyrate. To a lesser extent, also catalyzes the oxidation of L-serine, D-threonine, butan-2,3-diol, butan-1,2-diol, and propan-1,2-diol and cannot oxidize other L-amino acids. Cannot utilize NADP(H) instead of NAD(H). The protein is L-threonine 3-dehydrogenase of Pyrococcus furiosus (strain ATCC 43587 / DSM 3638 / JCM 8422 / Vc1).